The sequence spans 299 residues: Light-independent protochlorophyllide reductase iron-sulfur ATP-binding protein (299 aa).

Residues 1–23 form a disordered region; sequence MSPLDRTPPSLRGQDGEGSVQVH. Residues 43 to 48 and Lys-72 each bind ATP; that span reads GIGKST. A Mg(2+)-binding site is contributed by Ser-47. Cys-128 and Cys-162 together coordinate [4Fe-4S] cluster. ATP is bound by residues 213 to 214 and 237 to 239; these read NR and PDL.

It belongs to the NifH/BchL/ChlL family. In terms of assembly, homodimer. Protochlorophyllide reductase is composed of three subunits; BchL, BchN and BchB. It depends on [4Fe-4S] cluster as a cofactor.

The enzyme catalyses chlorophyllide a + oxidized 2[4Fe-4S]-[ferredoxin] + 2 ADP + 2 phosphate = protochlorophyllide a + reduced 2[4Fe-4S]-[ferredoxin] + 2 ATP + 2 H2O. It functions in the pathway porphyrin-containing compound metabolism; bacteriochlorophyll biosynthesis (light-independent). In terms of biological role, component of the dark-operative protochlorophyllide reductase (DPOR) that uses Mg-ATP and reduced ferredoxin to reduce ring D of protochlorophyllide (Pchlide) to form chlorophyllide a (Chlide). This reaction is light-independent. The L component serves as a unique electron donor to the NB-component of the complex, and binds Mg-ATP. This chain is Light-independent protochlorophyllide reductase iron-sulfur ATP-binding protein, found in Roseobacter denitrificans (strain ATCC 33942 / OCh 114) (Erythrobacter sp. (strain OCh 114)).